We begin with the raw amino-acid sequence, 434 residues long: Carboxy-terminal-processing protease (434 aa).

Residues 1–23 form the signal peptide; sequence MIRKVIFFVAGVFLSASLIVMAQ. Residues 86 to 166 enclose the PDZ domain; that stretch reads DMRDSTKGEF…TPITLTINRF (81 aa). Residues Ser294, Asp305, and Lys319 each act as charge relay system in the active site. The span at 383–392 shows a compositional bias: basic and acidic residues; that stretch reads HIKGKQESDK. Positions 383–406 are disordered; that stretch reads HIKGKQESDKGSGSAAFVPRDPKD.

This sequence belongs to the peptidase S41A family. May undergo autocatalytic processing at the C-terminus (398-434 or 425-434 missing).

The protein localises to the secreted. It catalyses the reaction The enzyme shows specific recognition of a C-terminal tripeptide, Xaa-Yaa-Zaa, in which Xaa is preferably Ala or Leu, Yaa is preferably Ala or Tyr, and Zaa is preferably Ala, but then cleaves at a variable distance from the C-terminus. A typical cleavage is -Ala-Ala-|-Arg-Ala-Ala-Lys-Glu-Asn-Tyr-Ala-Leu-Ala-Ala.. Functionally, involved in protection of the bacterium from thermal and osmotic stresses. The protein is Carboxy-terminal-processing protease (ctpA) of Bartonella bacilliformis (strain ATCC 35685 / KC583 / Herrer 020/F12,63).